Consider the following 297-residue polypeptide: Cbb3-type cytochrome c oxidase subunit CcoP (297 aa).

Residues 1–35 (MSKKPTTKKEVQTTGHQWDGIEELNTPLPRWWLWT) lie on the Cytoplasmic side of the membrane. The chain crosses the membrane as a helical span at residues 36 to 56 (FYATIIWGVAYSIAMPAWPIF). Topologically, residues 57 to 297 (SDKATPGLLG…SYVHSLGGGQ (241 aa)) are periplasmic. Cytochrome c domains follow at residues 108–199 (YTRN…LQIS) and 206–294 (VKAT…HSLG). Heme c contacts are provided by Cys-121, Cys-124, His-125, Met-174, Cys-219, Cys-222, His-223, and Met-264.

Belongs to the CcoP / FixP family. Component of the cbb3-type cytochrome c oxidase at least composed of CcoN, CcoO, CcoQ and CcoP. Interacts with CcoQ. Heme c serves as cofactor.

Its subcellular location is the cell inner membrane. It participates in energy metabolism; oxidative phosphorylation. Its function is as follows. C-type cytochrome. Part of the cbb3-type cytochrome c oxidase complex. CcoP subunit is required for transferring electrons from donor cytochrome c via its heme groups to CcoO subunit. From there, electrons are shuttled to the catalytic binuclear center of CcoN subunit where oxygen reduction takes place. The complex also functions as a proton pump. This chain is Cbb3-type cytochrome c oxidase subunit CcoP, found in Rhodobacter capsulatus (Rhodopseudomonas capsulata).